Reading from the N-terminus, the 335-residue chain is Teichoic acids export ATP-binding protein TagH (335 aa).

The region spanning 26-246 (IKGLFMPKSQ…YDEFVKWFNK (221 aa)) is the ABC transporter domain. 60-67 (GINGSGKS) serves as a coordination point for ATP.

Belongs to the ABC transporter superfamily. Teichoic acids exporter (TC 3.A.1.104.1) family. As to quaternary structure, the complex is composed of two ATP-binding proteins (TagH) and two transmembrane proteins (TagG).

The protein resides in the cell membrane. It carries out the reaction ATP + H2O + teichoic acidSide 1 = ADP + phosphate + teichoic acidSide 2.. Its function is as follows. Part of the ABC transporter complex TagGH involved in teichoic acids export. Responsible for energy coupling to the transport system. The sequence is that of Teichoic acids export ATP-binding protein TagH from Listeria innocua serovar 6a (strain ATCC BAA-680 / CLIP 11262).